The chain runs to 620 residues: Proline--tRNA ligase (620 aa).

This sequence belongs to the class-II aminoacyl-tRNA synthetase family. ProS type 1 subfamily. As to quaternary structure, homodimer.

Its subcellular location is the cytoplasm. It carries out the reaction tRNA(Pro) + L-proline + ATP = L-prolyl-tRNA(Pro) + AMP + diphosphate. Catalyzes the attachment of proline to tRNA(Pro) in a two-step reaction: proline is first activated by ATP to form Pro-AMP and then transferred to the acceptor end of tRNA(Pro). As ProRS can inadvertently accommodate and process non-cognate amino acids such as alanine and cysteine, to avoid such errors it has two additional distinct editing activities against alanine. One activity is designated as 'pretransfer' editing and involves the tRNA(Pro)-independent hydrolysis of activated Ala-AMP. The other activity is designated 'posttransfer' editing and involves deacylation of mischarged Ala-tRNA(Pro). The misacylated Cys-tRNA(Pro) is not edited by ProRS. The protein is Proline--tRNA ligase of Streptococcus thermophilus (strain ATCC BAA-491 / LMD-9).